A 339-amino-acid polypeptide reads, in one-letter code: Protein-glutamate methylesterase/protein-glutamine glutaminase 2 (339 aa).

The Response regulatory domain maps to 2–119 (NIGIVNDLPL…GLSTDASPQA (118 aa)). Residue Asp-53 is modified to 4-aspartylphosphate. Residues 141 to 336 (PGPAPERGQP…PQLISRITRP (196 aa)) form the CheB-type methylesterase domain. Catalysis depends on residues Ser-158, His-185, and Asp-278.

This sequence belongs to the CheB family. In terms of processing, phosphorylated by CheA. Phosphorylation of the N-terminal regulatory domain activates the methylesterase activity.

The protein resides in the cytoplasm. The enzyme catalyses [protein]-L-glutamate 5-O-methyl ester + H2O = L-glutamyl-[protein] + methanol + H(+). The catalysed reaction is L-glutaminyl-[protein] + H2O = L-glutamyl-[protein] + NH4(+). Involved in chemotaxis. Part of a chemotaxis signal transduction system that modulates chemotaxis in response to various stimuli. Catalyzes the demethylation of specific methylglutamate residues introduced into the chemoreceptors (methyl-accepting chemotaxis proteins or MCP) by CheR. Also mediates the irreversible deamidation of specific glutamine residues to glutamic acid. This chain is Protein-glutamate methylesterase/protein-glutamine glutaminase 2, found in Burkholderia lata (strain ATCC 17760 / DSM 23089 / LMG 22485 / NCIMB 9086 / R18194 / 383).